A 25-amino-acid chain; its full sequence is Histone H4 (25 aa).

Residues 1-14 (MSGRGKGGKGLGKG) are compositionally biased toward gly residues. A disordered region spans residues 1 to 25 (MSGRGKGGKGLGKGGAKRHRKVLRD). S2 is subject to N-acetylserine. N6-acetyllysine occurs at positions 6, 9, 13, 17, and 21. Residues 15–25 (GAKRHRKVLRD) show a composition bias toward basic residues. A DNA-binding region spans residues 17 to 21 (KRHRK).

It belongs to the histone H4 family. In terms of assembly, the nucleosome is a histone octamer containing two molecules each of H2A, H2B, H3 and H4 assembled in one H3-H4 heterotetramer and two H2A-H2B heterodimers. The octamer wraps approximately 147 bp of DNA.

It localises to the nucleus. The protein resides in the chromosome. Its function is as follows. Core component of nucleosome. Nucleosomes wrap and compact DNA into chromatin, limiting DNA accessibility to the cellular machineries which require DNA as a template. Histones thereby play a central role in transcription regulation, DNA repair, DNA replication and chromosomal stability. DNA accessibility is regulated via a complex set of post-translational modifications of histones, also called histone code, and nucleosome remodeling. This Medicago sativa (Alfalfa) protein is Histone H4.